A 204-amino-acid chain; its full sequence is NAD(P)H dehydrogenase (quinone) (204 aa).

Positions 4–195 (IQIVFYSMYG…AIARFQGAHV (192 aa)) constitute a Flavodoxin-like domain. FMN contacts are provided by residues 10-15 (SMYGHI) and 83-85 (TRF). Residue Tyr12 participates in NAD(+) binding. Trp103 contributes to the substrate binding site. FMN is bound by residues 118–124 (STATQHG) and His139.

It belongs to the WrbA family. FMN serves as cofactor.

The enzyme catalyses a quinone + NADH + H(+) = a quinol + NAD(+). The catalysed reaction is a quinone + NADPH + H(+) = a quinol + NADP(+). In Trichlorobacter lovleyi (strain ATCC BAA-1151 / DSM 17278 / SZ) (Geobacter lovleyi), this protein is NAD(P)H dehydrogenase (quinone).